The chain runs to 260 residues: Phosphatidylglycerol--prolipoprotein diacylglyceryl transferase (260 aa).

A run of 4 helical transmembrane segments spans residues 17 to 37 (VVKW…SWIF), 52 to 72 (LTAA…LHVI), 85 to 105 (ILSG…IGLW), and 113 to 133 (FNLG…QAIG). Residue Arg134 participates in a 1,2-diacyl-sn-glycero-3-phospho-(1'-sn-glycerol) binding. 3 helical membrane passes run 170 to 190 (VPTQ…SLFI), 198 to 218 (GQLF…IGFV), and 227 to 247 (GLEQ…PFFI).

Belongs to the Lgt family.

Its subcellular location is the cell membrane. It catalyses the reaction L-cysteinyl-[prolipoprotein] + a 1,2-diacyl-sn-glycero-3-phospho-(1'-sn-glycerol) = an S-1,2-diacyl-sn-glyceryl-L-cysteinyl-[prolipoprotein] + sn-glycerol 1-phosphate + H(+). The protein operates within protein modification; lipoprotein biosynthesis (diacylglyceryl transfer). Catalyzes the transfer of the diacylglyceryl group from phosphatidylglycerol to the sulfhydryl group of the N-terminal cysteine of a prolipoprotein, the first step in the formation of mature lipoproteins. This Dehalococcoides mccartyi (strain ATCC BAA-2266 / KCTC 15142 / 195) (Dehalococcoides ethenogenes (strain 195)) protein is Phosphatidylglycerol--prolipoprotein diacylglyceryl transferase.